We begin with the raw amino-acid sequence, 272 residues long: Acidic leucine-rich nuclear phosphoprotein 32-related protein 2 (272 aa).

LRR repeat units lie at residues 57–78, 79–100, and 106–127; these read SLEE…PRLP, ALRR…AAVA, and TLRH…APLA. One can recognise an LRRCT domain in the interval 139–184; it reads CPVTKAKGYRDKVFALIPSLKFLDGMDAEGNDCLDSDDEEDEEEDE. The interval 163-272 is disordered; sequence GMDAEGNDCL…DSEDDANGDN (110 aa). Residues 164–241 are compositionally biased toward acidic residues; that stretch reads MDAEGNDCLD…DEAGADEEDE (78 aa). Polar residues predominate over residues 248–257; that stretch reads SKGSSGSAQP.

It belongs to the ANP32 family.

In Oryza sativa subsp. japonica (Rice), this protein is Acidic leucine-rich nuclear phosphoprotein 32-related protein 2.